Reading from the N-terminus, the 236-residue chain is V-set and transmembrane domain-containing protein 2A (236 aa).

An N-terminal signal peptide occupies residues 1–24 (MMGIFLVYVGFVFFSVLYVQQGLS). Residues 27–143 (AKFTEFPRNV…YGELQEHKAQ (117 aa)) enclose the Ig-like V-type domain. An N-linked (GlcNAc...) asparagine glycan is attached at Asn35. A disulfide bridge connects residues Cys48 and Cys127. Asn175 is a glycosylation site (N-linked (GlcNAc...) asparagine). The segment covering 184–199 (IHGSANQRTHSTSSPQ) has biased composition (polar residues). Residues 184 to 206 (IHGSANQRTHSTSSPQVVAKIPK) are disordered.

Homodimer. N-glycosylated. N-linked glycosylation is critical for secretion but not for preadipocyte cell differentiation activity.

The protein localises to the secreted. Functionally, plays a role in the regulation of the early stage of white and brown preadipocyte cell differentiation. Promotes adipogenic commitment of preadipocytes by increasing gene expression of the transcription factor PPARG in a BMP4-dependent signaling pathway. This chain is V-set and transmembrane domain-containing protein 2A, found in Homo sapiens (Human).